We begin with the raw amino-acid sequence, 511 residues long: Ent-copalyl diphosphate synthase (511 aa).

The a divalent metal cation site is built by D291 and D293. The DXDD motif motif lies at 291 to 294 (DSDD).

Belongs to the terpene synthase family. Homodimer. The cofactor is a divalent metal cation.

The catalysed reaction is (2E,6E,10E)-geranylgeranyl diphosphate = ent-copalyl diphosphate. It participates in antibiotic biosynthesis. In terms of biological role, involved in viguiepinol biosynthesis. Catalyzes the conversion of geranylgeranyl diphosphate (GGDP) into copalyl diphosphate (ent-CDP). In Streptomyces sp. (strain KO-3988), this protein is Ent-copalyl diphosphate synthase.